The sequence spans 285 residues: Probable E3 ubiquitin-protein ligase IE1 (285 aa).

At 1 to 201 (MASKDSDVRC…LPGYWDRDDR (201 aa)) the chain is on the cytoplasmic side. The segment at 124 to 183 (SIDEEGKQCWICRDGESLPEARYCNCYGDLQYCHEECLKTWISMSGEKKCKFCQTPYKVN) adopts an RING-CH-type zinc-finger fold. Residues C132, C135, C147, C149, H157, C160, C173, and C176 each coordinate Zn(2+). A helical transmembrane segment spans residues 202–222 (FVFIAGFIGMGTILAGWIASF). At 223–238 (FYLLVVLCGKYFTYKD) the chain is on the extracellular side. Residues 239 to 259 (VMIVVGGLAIIQVVGLMFSLF) form a helical membrane-spanning segment. Residues 260–285 (MYFQIGNLLRQYINYMTETNIDPLRT) are Cytoplasmic-facing.

The protein localises to the membrane. It catalyses the reaction S-ubiquitinyl-[E2 ubiquitin-conjugating enzyme]-L-cysteine + [acceptor protein]-L-lysine = [E2 ubiquitin-conjugating enzyme]-L-cysteine + N(6)-ubiquitinyl-[acceptor protein]-L-lysine.. The protein operates within protein modification; protein ubiquitination. Controls the expression of later classes of genes and also of the IE genes (Potential). E3 ubiquitin-protein ligase. E3 ubiquitin ligases accept ubiquitin from an E2 ubiquitin-conjugating enzyme in the form of a thioester and then directly transfer the ubiquitin to targeted substrates. This chain is Probable E3 ubiquitin-protein ligase IE1 (IE1), found in Bovine herpesvirus 4 (strain DN-599) (BoHV-4).